The sequence spans 419 residues: Inositol-tetrakisphosphate 1-kinase (419 aa).

Lys-18 is a binding site for 1D-myo-inositol 1,3,4-trisphosphate. ATP is bound by residues Arg-106 and Lys-157. Residues 117–334 (EAYMKDDRIC…TGGAATEEVA (218 aa)) enclose the ATP-grasp domain. Positions 167 and 199 each coordinate 1D-myo-inositol 1,3,4-trisphosphate. Residues 188–199 (QNFINHNAVLYK), Ser-214, Ser-232, and Ser-236 contribute to the ATP site. Mg(2+) contacts are provided by Asp-281, Asp-295, and Asn-297. Asn-297 serves as a coordination point for 1D-myo-inositol 1,3,4-trisphosphate. The residue at position 388 (Lys-388) is an N6-acetyllysine; by EP300 and CREBBP. Position 401 is a phosphoserine (Ser-401). An N6-acetyllysine; by EP300 and CREBBP modification is found at Lys-415.

The protein belongs to the ITPK1 family. In terms of assembly, monomer. Interacts with GPS1/COPS1. The cofactor is Mg(2+). Acetylation by EP300 and CREBBP destabilizes ITPK1, and down-regulates enzymatic activity. Deacetylated by SIRT1.

The enzyme catalyses 1D-myo-inositol 3,4,5,6-tetrakisphosphate + ATP = 1D-myo-inositol 1,3,4,5,6-pentakisphosphate + ADP + H(+). It carries out the reaction 1D-myo-inositol 1,3,4-trisphosphate + ATP = 1D-myo-inositol 1,3,4,5-tetrakisphosphate + ADP + H(+). The catalysed reaction is 1D-myo-inositol 1,3,4-trisphosphate + ATP = 1D-myo-inositol 1,3,4,6-tetrakisphosphate + ADP + H(+). It catalyses the reaction 1D-myo-inositol 3,4,6-trisphosphate + ATP = 1D-myo-inositol 1,3,4,6-tetrakisphosphate + ADP + H(+). The enzyme catalyses 1D-myo-inositol 1,3,4-trisphosphate + 1D-myo-inositol 1,3,4,5,6-pentakisphosphate = 1D-myo-inositol 3,4,5,6-tetrakisphosphate + 1D-myo-inositol 1,3,4,6-tetrakisphosphate. It carries out the reaction 1D-myo-inositol 1,3,4-trisphosphate + 1D-myo-inositol 1,3,4,5,6-pentakisphosphate = 1D-myo-inositol 3,4,5,6-tetrakisphosphate + 1D-myo-inositol 1,3,4,5-tetrakisphosphate. In terms of biological role, kinase that can phosphorylate various inositol polyphosphate such as Ins(3,4,5,6)P4 or Ins(1,3,4)P3. Phosphorylates Ins(3,4,5,6)P4 at position 1 to form Ins(1,3,4,5,6)P5. This reaction is thought to have regulatory importance, since Ins(3,4,5,6)P4 is an inhibitor of plasma membrane Ca(2+)-activated Cl(-) channels, while Ins(1,3,4,5,6)P5 is not. Also phosphorylates Ins(1,3,4)P3 on O-5 and O-6 to form Ins(1,3,4,6)P4, an essential molecule in the hexakisphosphate (InsP6) pathway. Also acts as an inositol polyphosphate phosphatase that dephosphorylates Ins(1,3,4,5)P4 and Ins(1,3,4,6)P4 to Ins(1,3,4)P3, and Ins(1,3,4,5,6)P5 to Ins(3,4,5,6)P4. May also act as an isomerase that interconverts the inositol tetrakisphosphate isomers Ins(1,3,4,5)P4 and Ins(1,3,4,6)P4 in the presence of ADP and magnesium. Probably acts as the rate-limiting enzyme of the InsP6 pathway. Modifies TNF-alpha-induced apoptosis by interfering with the activation of TNFRSF1A-associated death domain. Plays an important role in MLKL-mediated necroptosis. Produces highly phosphorylated inositol phosphates such as inositolhexakisphosphate (InsP6) which bind to MLKL mediating the release of an N-terminal auto-inhibitory region leading to its activation. Essential for activated phospho-MLKL to oligomerize and localize to the cell membrane during necroptosis. The polypeptide is Inositol-tetrakisphosphate 1-kinase (Mus musculus (Mouse)).